The following is a 255-amino-acid chain: HTH-type transcriptional regulator SkgA (255 aa).

The HTH merR-type domain occupies 3–72 (VYTVKQMARL…LKDIQAALDQ (70 aa)). The H-T-H motif DNA-binding region spans 6 to 25 (VKQMARLSGVSVRALHHYDA).

Regulates the induction of katG (catalase-peroxidase) in stationary phase. The sequence is that of HTH-type transcriptional regulator SkgA (skgA) from Caulobacter vibrioides (strain ATCC 19089 / CIP 103742 / CB 15) (Caulobacter crescentus).